The primary structure comprises 186 residues: Transcription factor FapR (186 aa).

This sequence belongs to the FapR family.

In terms of biological role, transcriptional factor involved in regulation of membrane lipid biosynthesis by repressing genes involved in fatty acid and phospholipid metabolism. This chain is Transcription factor FapR, found in Staphylococcus epidermidis (strain ATCC 35984 / DSM 28319 / BCRC 17069 / CCUG 31568 / BM 3577 / RP62A).